A 190-amino-acid polypeptide reads, in one-letter code: Peptidyl-tRNA hydrolase (190 aa).

TRNA is bound at residue phenylalanine 14. The active-site Proton acceptor is the histidine 19. Methionine 64, asparagine 66, and asparagine 112 together coordinate tRNA.

Belongs to the PTH family. Monomer.

Its subcellular location is the cytoplasm. It carries out the reaction an N-acyl-L-alpha-aminoacyl-tRNA + H2O = an N-acyl-L-amino acid + a tRNA + H(+). Functionally, hydrolyzes ribosome-free peptidyl-tRNAs (with 1 or more amino acids incorporated), which drop off the ribosome during protein synthesis, or as a result of ribosome stalling. In terms of biological role, catalyzes the release of premature peptidyl moieties from peptidyl-tRNA molecules trapped in stalled 50S ribosomal subunits, and thus maintains levels of free tRNAs and 50S ribosomes. This chain is Peptidyl-tRNA hydrolase, found in Staphylococcus epidermidis (strain ATCC 35984 / DSM 28319 / BCRC 17069 / CCUG 31568 / BM 3577 / RP62A).